Consider the following 470-residue polypeptide: Glutathione reductase (470 aa).

FAD contacts are provided by S16 and G17. S16 contributes to the glutathione binding site. Residue R23 participates in glutathione binding. Residues E36, T43, C44, and K52 each contribute to the FAD site. The cysteines at positions 44 and 49 are disulfide-linked. Y104 contacts glutathione. A120 is an FAD binding site. The NADP(+) site is built by G190, I193, E196, R213, and R219. Glutathione is bound at residue T228. An NADP(+)-binding site is contributed by G280. Residue D321 coordinates FAD. NADP(+) is bound at residue E327. FAD is bound at residue T329. R337 contacts glutathione. Position 362 (A362) interacts with NADP(+). Residue K412 participates in glutathione binding. H459 contributes to the FAD binding site. H459 acts as the Proton acceptor in catalysis.

The protein belongs to the class-I pyridine nucleotide-disulfide oxidoreductase family. As to quaternary structure, homodimer. FAD serves as cofactor.

Its subcellular location is the cytoplasm. The protein resides in the mitochondrion. It catalyses the reaction 2 glutathione + NADP(+) = glutathione disulfide + NADPH + H(+). Catalyzes the reduction of glutathione disulfide (GSSG) to reduced glutathione (GSH). Constitutes the major mechanism to maintain a high GSH:GSSG ratio in the cytosol. The chain is Glutathione reductase (GLR1) from Yarrowia lipolytica (strain CLIB 122 / E 150) (Yeast).